The following is a 529-amino-acid chain: MASREEEQRETTPERGRGAARRPPTMEDVSSPSPSPPPPRAPPKKRLRRRLESEDEEDSSQDALVPRTPSPRPSTSTADLAIASKKKKKRPSPKPERPPSPEVIVDSEEEREDVALQMVGFSNPPVLIKHGKGGKRTVRRLNEDDPVARGMRTQEEKEESSEAESESTVINPLSLPIVSAWEKGMEAARALMDKYHVDNDLKANFKLLPDQVEALAAVCKTWLNEEHRGLQLTFTSNKTFVTMMGRFLQAYLQSFAEVTYKHHEPTGCALWLHRCAEIEGELKCLHGSIMINKEHVIEMDVTSENGQRALKEQSSKAKIVKNRWGRNVVQISNTDARCCVHDAACPANQFSGKSCGMFFSEGAKAQVAFKQIKAFMQALYPNAQTGHGHLLMPLRCECNSKPGHAPFLGRQLPKLTPFALSNAEDLDADLISDKSVLASVHHPALIVFQCCNPVYRNSRAQGGGPNCDFKISAPDLLNALVMVRSLWSENFTELPRMVVPEFKWSTKHQYRNVSLPVAHSDARQNPFDF.

Positions 1–17 (MASREEEQRETTPERGR) are enriched in basic and acidic residues. Disordered regions lie at residues 1–108 (MASR…VDSE) and 125–168 (PVLI…SEST). A compositionally biased stretch (basic residues) spans 129-139 (KHGKGGKRTVR). Positions 140-155 (RLNEDDPVARGMRTQE) are enriched in basic and acidic residues. Residues 156–165 (EKEESSEAES) show a composition bias toward acidic residues. Tyrosine 195 carries the phosphotyrosine; by host modification. Residues cysteine 284 and histidine 286 each coordinate Zn(2+). A flexible loop region spans residues 297–331 (IEMDVTSENGQRALKEQSSKAKIVKNRWGRNVVQI). Zn(2+)-binding residues include cysteine 339, cysteine 355, cysteine 396, cysteine 398, cysteine 450, and cysteine 467. The interval 513–529 (VSLPVAHSDARQNPFDF) is C-terminal arm, DBP binding.

Belongs to the adenoviridae E2A DNA-binding protein family. Homomultimerizes on viral ssDNA bound to pTP. Forms an initiation complex with viral polymerase, pTP and hosts NFIA and POU2F1/OCT1. Interacts with host SRCAP.

It is found in the host nucleus. Its function is as follows. Plays a role in the elongation phase of viral strand displacement replication by unwinding the template in an ATP-independent fashion, employing its capacity to form multimers. Also enhances the rate of initiation. Released from template upon second strand synthesis. Assembles in complex with viral pTP, viral pol, host NFIA and host POU2F1/OCT1 on viral origin of replication. Covers the whole ssDNA genome during synthesis. The complementary strand synthesis induces its release from DNA template. May inhibit cellular transcription mediated by the interaction between host SRCAP and CBP. This chain is DNA-binding protein, found in Human adenovirus C serotype 2 (HAdV-2).